Consider the following 179-residue polypeptide: Translation initiation factor IF-3 (179 aa).

Belongs to the IF-3 family. Monomer.

It localises to the cytoplasm. Functionally, IF-3 binds to the 30S ribosomal subunit and shifts the equilibrium between 70S ribosomes and their 50S and 30S subunits in favor of the free subunits, thus enhancing the availability of 30S subunits on which protein synthesis initiation begins. The polypeptide is Translation initiation factor IF-3 (Buchnera aphidicola subsp. Schizaphis graminum (strain Sg)).